Here is a 129-residue protein sequence, read N- to C-terminus: MASRLLRGVGALAAQALRAHGPRGVAATRSMASGGGVPTDEEQATGLEREIMIAAQRGLDPYNMLPPKAASGTKEDPNLVPSVSNKRIVGCICEEDNCTVIWFWLHQGESQRCPNCGTHYKLVPYQMVH.

A mitochondrion-targeting transit peptide spans 1 to 31 (MASRLLRGVGALAAQALRAHGPRGVAATRSM). Lys-68 and Lys-86 each carry N6-acetyllysine. Residues Cys-91, Cys-93, Cys-113, and Cys-116 each coordinate Zn(2+). Lys-121 carries the post-translational modification N6-acetyllysine.

The protein belongs to the cytochrome c oxidase subunit 5B family. As to quaternary structure, component of the cytochrome c oxidase (complex IV, CIV), a multisubunit enzyme composed of 14 subunits. The complex is composed of a catalytic core of 3 subunits MT-CO1, MT-CO2 and MT-CO3, encoded in the mitochondrial DNA, and 11 supernumerary subunits COX4I, COX5A, COX5B, COX6A, COX6B, COX6C, COX7A, COX7B, COX7C, COX8 and NDUFA4, which are encoded in the nuclear genome. The complex exists as a monomer or a dimer and forms supercomplexes (SCs) in the inner mitochondrial membrane with NADH-ubiquinone oxidoreductase (complex I, CI) and ubiquinol-cytochrome c oxidoreductase (cytochrome b-c1 complex, complex III, CIII), resulting in different assemblies (supercomplex SCI(1)III(2)IV(1) and megacomplex MCI(2)III(2)IV(2)).

It is found in the mitochondrion inner membrane. It participates in energy metabolism; oxidative phosphorylation. In terms of biological role, component of the cytochrome c oxidase, the last enzyme in the mitochondrial electron transport chain which drives oxidative phosphorylation. The respiratory chain contains 3 multisubunit complexes succinate dehydrogenase (complex II, CII), ubiquinol-cytochrome c oxidoreductase (cytochrome b-c1 complex, complex III, CIII) and cytochrome c oxidase (complex IV, CIV), that cooperate to transfer electrons derived from NADH and succinate to molecular oxygen, creating an electrochemical gradient over the inner membrane that drives transmembrane transport and the ATP synthase. Cytochrome c oxidase is the component of the respiratory chain that catalyzes the reduction of oxygen to water. Electrons originating from reduced cytochrome c in the intermembrane space (IMS) are transferred via the dinuclear copper A center (CU(A)) of subunit 2 and heme A of subunit 1 to the active site in subunit 1, a binuclear center (BNC) formed by heme A3 and copper B (CU(B)). The BNC reduces molecular oxygen to 2 water molecules using 4 electrons from cytochrome c in the IMS and 4 protons from the mitochondrial matrix. In Rattus norvegicus (Rat), this protein is Cytochrome c oxidase subunit 5B, mitochondrial (Cox5b).